Reading from the N-terminus, the 469-residue chain is Diaminopimelate decarboxylase (469 aa).

Residues 1–23 (MLSTEMPLPTTGSTLLKTPASPS) form a disordered region. Lys93 carries the N6-(pyridoxal phosphate)lysine modification. Pyridoxal 5'-phosphate-binding positions include Gly279 and 321 to 324 (EPGR). Residues Arg324, Arg361, and Tyr365 each contribute to the substrate site. The active-site Proton donor is Cys392. Residues Glu393 and Tyr421 each contribute to the substrate site. Tyr421 is a pyridoxal 5'-phosphate binding site.

It belongs to the Orn/Lys/Arg decarboxylase class-II family. LysA subfamily. Homodimer. It depends on pyridoxal 5'-phosphate as a cofactor.

It catalyses the reaction meso-2,6-diaminopimelate + H(+) = L-lysine + CO2. It functions in the pathway amino-acid biosynthesis; L-lysine biosynthesis via DAP pathway; L-lysine from DL-2,6-diaminopimelate: step 1/1. Functionally, specifically catalyzes the decarboxylation of meso-diaminopimelate (meso-DAP) to L-lysine. This is Diaminopimelate decarboxylase from Synechocystis sp. (strain ATCC 27184 / PCC 6803 / Kazusa).